Here is a 364-residue protein sequence, read N- to C-terminus: DNA replication and repair protein RecF (364 aa).

Residue 23–30 (GPNGIGKS) coordinates ATP.

This sequence belongs to the RecF family.

Its subcellular location is the cytoplasm. Functionally, the RecF protein is involved in DNA metabolism; it is required for DNA replication and normal SOS inducibility. RecF binds preferentially to single-stranded, linear DNA. It also seems to bind ATP. This chain is DNA replication and repair protein RecF, found in Synechococcus sp. (strain CC9605).